We begin with the raw amino-acid sequence, 172 residues long: Type IV secretion system putative outer membrane lipoprotein BMEII0036 (172 aa).

The signal sequence occupies residues 1–15 (MRTLVMVACAVSLAA). C16 carries the N-palmitoyl cysteine lipid modification. The S-diacylglycerol cysteine moiety is linked to residue C16. The region spanning 58–172 (WPARPPKQTV…RRVDIEILRK (115 aa)) is the OmpA-like domain.

The protein resides in the cell outer membrane. In Brucella melitensis biotype 1 (strain ATCC 23456 / CCUG 17765 / NCTC 10094 / 16M), this protein is Type IV secretion system putative outer membrane lipoprotein BMEII0036.